A 366-amino-acid chain; its full sequence is Phospho-N-acetylmuramoyl-pentapeptide-transferase (366 aa).

A run of 10 helical transmembrane segments spans residues 27–47 (AALF…INSL), 71–91 (TPTM…LLWA), 93–113 (LSNV…AIGF), 134–154 (LGIE…TALA), 174–194 (FMIN…VGAG), 205–225 (GLAI…AYLA), 245–265 (LAVV…FNAP), 268–288 (AIFM…TVAV), 294–314 (IVMA…IIQV), and 343–363 (QVVI…LSTL).

This sequence belongs to the glycosyltransferase 4 family. MraY subfamily. Mg(2+) is required as a cofactor.

Its subcellular location is the cell inner membrane. It carries out the reaction UDP-N-acetyl-alpha-D-muramoyl-L-alanyl-gamma-D-glutamyl-meso-2,6-diaminopimeloyl-D-alanyl-D-alanine + di-trans,octa-cis-undecaprenyl phosphate = di-trans,octa-cis-undecaprenyl diphospho-N-acetyl-alpha-D-muramoyl-L-alanyl-D-glutamyl-meso-2,6-diaminopimeloyl-D-alanyl-D-alanine + UMP. It functions in the pathway cell wall biogenesis; peptidoglycan biosynthesis. Functionally, catalyzes the initial step of the lipid cycle reactions in the biosynthesis of the cell wall peptidoglycan: transfers peptidoglycan precursor phospho-MurNAc-pentapeptide from UDP-MurNAc-pentapeptide onto the lipid carrier undecaprenyl phosphate, yielding undecaprenyl-pyrophosphoryl-MurNAc-pentapeptide, known as lipid I. The chain is Phospho-N-acetylmuramoyl-pentapeptide-transferase from Rhizobium leguminosarum bv. trifolii (strain WSM2304).